The sequence spans 212 residues: Thymidylate kinase (212 aa).

11–18 contacts ATP; sequence GMEGAGKS.

Belongs to the thymidylate kinase family.

The catalysed reaction is dTMP + ATP = dTDP + ADP. Functionally, phosphorylation of dTMP to form dTDP in both de novo and salvage pathways of dTTP synthesis. This Colwellia psychrerythraea (strain 34H / ATCC BAA-681) (Vibrio psychroerythus) protein is Thymidylate kinase.